The sequence spans 119 residues: Large ribosomal subunit protein uL22 (119 aa).

It belongs to the universal ribosomal protein uL22 family. Part of the 50S ribosomal subunit.

This protein binds specifically to 23S rRNA; its binding is stimulated by other ribosomal proteins, e.g. L4, L17, and L20. It is important during the early stages of 50S assembly. It makes multiple contacts with different domains of the 23S rRNA in the assembled 50S subunit and ribosome. In terms of biological role, the globular domain of the protein is located near the polypeptide exit tunnel on the outside of the subunit, while an extended beta-hairpin is found that lines the wall of the exit tunnel in the center of the 70S ribosome. This Microcystis aeruginosa (strain NIES-843 / IAM M-2473) protein is Large ribosomal subunit protein uL22.